Here is a 280-residue protein sequence, read N- to C-terminus: Putative sugar uptake protein (280 aa).

10 helical membrane-spanning segments follow: residues 4 to 21, 33 to 52, 56 to 78, 91 to 113, 117 to 136, 149 to 166, 176 to 195, 207 to 229, 233 to 255, and 262 to 279; these read LIALIPALGWGIFSLIAG, MGLGTGALIIGIITAIIHPA, ITIFSLSLISGMFCALGQSGQFI, LSTGFQLIGNTLIGAIIFGEWTS, YLIGTLALILIIVGVSLTAI, IILLLFTSIGYWIYSSFP, LFLPQMIGIFIGSIIFLLVS, WLNIFSGFSYGIAAFSYIFSAQL, ITAFIYSQLCVIISTLGGIFFIG, and ELIATFVGLILIIIGAAI.

The protein belongs to the GRP transporter (TC 2.A.7.5) family.

It is found in the cell membrane. This Lactobacillus helveticus (Lactobacillus suntoryeus) protein is Putative sugar uptake protein.